A 477-amino-acid polypeptide reads, in one-letter code: Glycogen synthase (477 aa).

Lysine 15 lines the ADP-alpha-D-glucose pocket.

This sequence belongs to the glycosyltransferase 1 family. Bacterial/plant glycogen synthase subfamily.

It carries out the reaction [(1-&gt;4)-alpha-D-glucosyl](n) + ADP-alpha-D-glucose = [(1-&gt;4)-alpha-D-glucosyl](n+1) + ADP + H(+). It functions in the pathway glycan biosynthesis; glycogen biosynthesis. Synthesizes alpha-1,4-glucan chains using ADP-glucose. The sequence is that of Glycogen synthase from Mannheimia succiniciproducens (strain KCTC 0769BP / MBEL55E).